The sequence spans 251 residues: Flap endonuclease Xni (251 aa).

Mg(2+) is bound at residue Asp-104. Residues Val-160–Lys-250 form the 5'-3' exonuclease domain. Residues Leu-171, Ala-172, Pro-180, Val-182, and Val-185 each coordinate K(+). An interaction with DNA region spans residues Gly-184–Thr-189.

This sequence belongs to the Xni family. Requires Mg(2+) as cofactor. It depends on K(+) as a cofactor.

Functionally, has flap endonuclease activity. During DNA replication, flap endonucleases cleave the 5'-overhanging flap structure that is generated by displacement synthesis when DNA polymerase encounters the 5'-end of a downstream Okazaki fragment. This Yersinia pseudotuberculosis serotype I (strain IP32953) protein is Flap endonuclease Xni.